The sequence spans 131 residues: UPF0102 protein YraN (131 aa).

The segment covering 1-19 has biased composition (polar residues); the sequence is MATVPTRSGSPRQLTTKQT. Residues 1–21 form a disordered region; that stretch reads MATVPTRSGSPRQLTTKQTGD.

Belongs to the UPF0102 family.

In Escherichia coli (strain K12 / MC4100 / BW2952), this protein is UPF0102 protein YraN.